Consider the following 545-residue polypeptide: Glucose-6-phosphate isomerase (545 aa).

The active-site Proton donor is glutamate 351. Residues histidine 382 and lysine 510 contribute to the active site.

This sequence belongs to the GPI family.

It is found in the cytoplasm. It carries out the reaction alpha-D-glucose 6-phosphate = beta-D-fructose 6-phosphate. Its pathway is carbohydrate biosynthesis; gluconeogenesis. The protein operates within carbohydrate degradation; glycolysis; D-glyceraldehyde 3-phosphate and glycerone phosphate from D-glucose: step 2/4. Catalyzes the reversible isomerization of glucose-6-phosphate to fructose-6-phosphate. The sequence is that of Glucose-6-phosphate isomerase from Shewanella putrefaciens (strain CN-32 / ATCC BAA-453).